The following is a 471-amino-acid chain: Putative multidrug resistance protein MdtD (471 aa).

The next 13 helical transmembrane spans lie at 12–32 (LWIVAFGFFMQSLDTTIVNTA), 49–69 (MIIVSYVLTVAVMLPASGWLA), 77–97 (IFFTAIVLFTAGSLFCAQAST), 102–124 (VMARVLQGVGGAMMVPVGRLTVM), 138–158 (FVTLPGQVGPLLGPALGGVLV), 165–185 (WIFLINIPVGIVGAIATLCLM), 195–215 (FDLSGFLLLAAGMATLTLALD), 220–240 (LGISPAWLAGLVAVGLCALLL), 263–283 (FSLGLGGSFAGRIGSGMLPFM), 286–306 (VFLQIGLGFSPFHAGLMMIPM), 329–351 (VLVASTLGLAAVSLLFMFSALAG), 393–413 (LLSMVMQLSMSIGVTIAGLLL), and 431–451 (VFLYTYLSMAAIIALPALIFS).

Belongs to the major facilitator superfamily. TCR/Tet family.

It is found in the cell inner membrane. The polypeptide is Putative multidrug resistance protein MdtD (Klebsiella pneumoniae subsp. pneumoniae (strain ATCC 700721 / MGH 78578)).